The primary structure comprises 177 residues: Large ribosomal subunit protein uL6 (177 aa).

It belongs to the universal ribosomal protein uL6 family. As to quaternary structure, part of the 50S ribosomal subunit.

This protein binds to the 23S rRNA, and is important in its secondary structure. It is located near the subunit interface in the base of the L7/L12 stalk, and near the tRNA binding site of the peptidyltransferase center. This is Large ribosomal subunit protein uL6 from Haemophilus ducreyi (strain 35000HP / ATCC 700724).